The primary structure comprises 625 residues: DNA mismatch repair protein MutL (625 aa).

The protein belongs to the DNA mismatch repair MutL/HexB family.

This protein is involved in the repair of mismatches in DNA. It is required for dam-dependent methyl-directed DNA mismatch repair. May act as a 'molecular matchmaker', a protein that promotes the formation of a stable complex between two or more DNA-binding proteins in an ATP-dependent manner without itself being part of a final effector complex. This Xanthomonas axonopodis pv. citri (strain 306) protein is DNA mismatch repair protein MutL.